Consider the following 234-residue polypeptide: Adenosine 5'-phosphosulfate reductase (234 aa).

Positions 120, 121, 203, and 206 each coordinate [4Fe-4S] cluster. Cysteine 229 acts as the Nucleophile; cysteine thiosulfonate intermediate in catalysis.

Belongs to the PAPS reductase family. CysH subfamily. [4Fe-4S] cluster serves as cofactor.

Its subcellular location is the cytoplasm. It carries out the reaction [thioredoxin]-disulfide + sulfite + AMP + 2 H(+) = adenosine 5'-phosphosulfate + [thioredoxin]-dithiol. Its pathway is sulfur metabolism; hydrogen sulfide biosynthesis; sulfite from sulfate. Its function is as follows. Catalyzes the formation of sulfite from adenosine 5'-phosphosulfate (APS) using thioredoxin as an electron donor. This chain is Adenosine 5'-phosphosulfate reductase, found in Bacillus cereus (strain ZK / E33L).